Here is a 331-residue protein sequence, read N- to C-terminus: UPF0284 protein PF0303 (331 aa).

The protein belongs to the UPF0284 family.

This chain is UPF0284 protein PF0303, found in Pyrococcus furiosus (strain ATCC 43587 / DSM 3638 / JCM 8422 / Vc1).